Consider the following 213-residue polypeptide: Large ribosomal subunit protein uL3 (213 aa).

The segment at 130–161 is disordered; the sequence is KRGNMTHGSKNHRLPGSTGAGTTPGRVYPGKR.

It belongs to the universal ribosomal protein uL3 family. In terms of assembly, part of the 50S ribosomal subunit. Forms a cluster with proteins L14 and L19.

One of the primary rRNA binding proteins, it binds directly near the 3'-end of the 23S rRNA, where it nucleates assembly of the 50S subunit. The chain is Large ribosomal subunit protein uL3 from Picosynechococcus sp. (strain ATCC 27264 / PCC 7002 / PR-6) (Agmenellum quadruplicatum).